The sequence spans 189 residues: Cold-regulated 413 plasma membrane protein 3 (189 aa).

Topologically, residues 1 to 24 (MENIEYLNEIQAVAGKLIHSYGVP) are extracellular. A helical membrane pass occupies residues 25 to 45 (VMITLFLRWLASIVAVFLMIL). Over 46–55 (DQTKWKYSNN) the chain is Cytoplasmic. Residues 56-76 (IMASLLAPYLFSSLPIVIFQV) traverse the membrane as a helical segment. The Extracellular segment spans residues 77 to 79 (LRN). A helical transmembrane segment spans residues 80–100 (GVGKWIALLTVILRLFLPNHF). The Cytoplasmic portion of the chain corresponds to 101 to 104 (HESL). The helical transmembrane segment at 105–125 (EIPGATILLIVVTPSDIGAIF) threads the bilayer. Over 126-168 (RDDLRYTGGDVCLLTSFYLINKHTKACGGIKNSFTQKDKVTYS) the chain is Extracellular. A helical transmembrane segment spans residues 169-189 (ICLWILFVYPILSSFAALFYL).

It belongs to the Cold-regulated 413 protein family.

It is found in the cell membrane. This Arabidopsis thaliana (Mouse-ear cress) protein is Cold-regulated 413 plasma membrane protein 3.